We begin with the raw amino-acid sequence, 1464 residues long: DNA polymerase III PolC-type (1464 aa).

The Exonuclease domain maps to 426–582; it reads YVVFDVETTG…YDAEATGRLL (157 aa).

The protein belongs to the DNA polymerase type-C family. PolC subfamily.

It localises to the cytoplasm. It catalyses the reaction DNA(n) + a 2'-deoxyribonucleoside 5'-triphosphate = DNA(n+1) + diphosphate. Functionally, required for replicative DNA synthesis. This DNA polymerase also exhibits 3' to 5' exonuclease activity. This chain is DNA polymerase III PolC-type, found in Streptococcus thermophilus (strain CNRZ 1066).